Reading from the N-terminus, the 113-residue chain is Hydrogenase maturation factor HypA (113 aa).

His-2 contributes to the Ni(2+) binding site. Zn(2+) is bound by residues Cys-73, Cys-76, Cys-89, and Cys-92.

The protein belongs to the HypA/HybF family.

Involved in the maturation of [NiFe] hydrogenases. Required for nickel insertion into the metal center of the hydrogenase. This Dechloromonas aromatica (strain RCB) protein is Hydrogenase maturation factor HypA.